A 209-amino-acid polypeptide reads, in one-letter code: Small ribosomal subunit protein uS4 (209 aa).

In terms of domain architecture, S4 RNA-binding spans 99 to 164; sequence TRLDNVVYRM…IPRVQELKEL (66 aa).

Belongs to the universal ribosomal protein uS4 family. As to quaternary structure, part of the 30S ribosomal subunit. Contacts protein S5. The interaction surface between S4 and S5 is involved in control of translational fidelity.

Its function is as follows. One of the primary rRNA binding proteins, it binds directly to 16S rRNA where it nucleates assembly of the body of the 30S subunit. With S5 and S12 plays an important role in translational accuracy. In Natranaerobius thermophilus (strain ATCC BAA-1301 / DSM 18059 / JW/NM-WN-LF), this protein is Small ribosomal subunit protein uS4.